The following is a 376-amino-acid chain: Pregnancy-associated glycoprotein 2 (376 aa).

The N-terminal stretch at 1–15 (MKWLVLLGLVALSEC) is a signal peptide. 2 N-linked (GlcNAc...) asparagine glycosylation sites follow: asparagine 51 and asparagine 71. Positions 68–373 (YVGNITIGTP…DRKNRRIGLA (306 aa)) constitute a Peptidase A1 domain. The active site involves aspartate 86. A disulfide bond links cysteine 99 and cysteine 104. N-linked (GlcNAc...) asparagine glycans are attached at residues asparagine 114, asparagine 248, and asparagine 252. The cysteines at positions 258 and 262 are disulfide-linked. Aspartate 267 is a catalytic residue. A disulfide bond links cysteine 300 and cysteine 333. Residue asparagine 343 is glycosylated (N-linked (GlcNAc...) asparagine).

The protein belongs to the peptidase A1 family. Post-translationally, N-Glycosylated; the glycans terminate in either N-acetyl-galactosamine (GalNAc) or N-acetyllactosamine. Terminal GalNAc on Asn-linked glycans is greatly reduced prior to parturition while lactosamine-type N-glycans remain unaltered. As to expression, trophoblast and placental tissue. Localized to both the mononucleate and binucleate cells of the trophectoderm.

The protein localises to the secreted. It is found in the extracellular space. PAG2 or a processed derivative of this molecule might represent a factor that binds the LH receptor. In Bos taurus (Bovine), this protein is Pregnancy-associated glycoprotein 2 (PAG2).